A 337-amino-acid chain; its full sequence is MTSQATSQATSPALTTPVDAAPQISLATCVAPLVEALIRDADALRLKVSRGPRDALIVDAGITAAGGLEAGRRIAEICLGGLGRVALVPTGRFSPWDTLASVSTSGPVLACLGSQYAGWSLAAGDFFALGSGPGRAIAAVETLYGELGYRDRGEKVVLVLETAVVPPAEVVDEIAARCAVAPSDITLILTPTSSLAGTVQIVARVLEVALHKAHALHFPLEHIADGVGSAPICPPSPDFLTAMGRTNDAVLYGGDVHLFVHGPAEAAKDLATRLPSLASRDYGRPFGEIFAGYDCDFYKVDPLLFSPARVTVTAIDHGESFTAGGFDPILIARSFGG.

Belongs to the MCH family.

The protein resides in the cytoplasm. It carries out the reaction 5,10-methenyl-5,6,7,8-tetrahydromethanopterin + H2O = N(5)-formyl-5,6,7,8-tetrahydromethanopterin + H(+). Its pathway is one-carbon metabolism; formaldehyde degradation; formate from formaldehyde (H(4)MPT route): step 3/5. In terms of biological role, catalyzes the hydrolysis of methenyl-H(4)MPT(+) to 5-formyl-H(4)MPT. The polypeptide is Methenyltetrahydromethanopterin cyclohydrolase (mch) (Xanthobacter autotrophicus).